A 1344-amino-acid polypeptide reads, in one-letter code: Regulatory-associated protein of TOR 1 (1344 aa).

Basic and acidic residues predominate over residues cysteine 28 to alanine 44. 2 disordered regions span residues cysteine 28–glutamate 56 and alanine 771–serine 818. The segment covering serine 785–serine 816 has biased composition (low complexity). WD repeat units follow at residues arginine 1025–glycine 1064, phenylalanine 1070–lysine 1111, glycine 1125–serine 1164, glutamate 1168–cysteine 1208, glutamine 1214–leucine 1255, alanine 1259–isoleucine 1298, and glutamine 1307–arginine 1344.

It belongs to the WD repeat RAPTOR family. Interacts with TOR, ATPK1 and ML1. Interacts with KIN10. In terms of processing, phosphorylated by KIN10. As to expression, expressed in roots, leaves, flowers and seeds.

It localises to the cytoplasm. Its function is as follows. Probable component of the plant TOR kinase pathway that recruits substrates for TOR. Modulates plant cell growth and regulates the activity of ATPK1 kinase in response to osmotic stress. The protein is Regulatory-associated protein of TOR 1 (RAPTOR1) of Arabidopsis thaliana (Mouse-ear cress).